Consider the following 131-residue polypeptide: MSLQICVMTPDCIFLNKEVDEIILPTNTGQMGVLSNHAPLITALDIGVMLVRTQKDWESVAVMGGFALVKQNQITVLVNEAESKETIDPQEAEEAFATAKQTLEQATGQKEKVEANFAFKRARARYQVIGA.

This sequence belongs to the ATPase epsilon chain family. F-type ATPases have 2 components, CF(1) - the catalytic core - and CF(0) - the membrane proton channel. CF(1) has five subunits: alpha(3), beta(3), gamma(1), delta(1), epsilon(1). CF(0) has three main subunits: a, b and c.

Its subcellular location is the plastid. It is found in the chloroplast thylakoid membrane. In terms of biological role, produces ATP from ADP in the presence of a proton gradient across the membrane. The protein is ATP synthase epsilon chain, chloroplastic of Oltmannsiellopsis viridis (Marine flagellate).